The following is a 341-amino-acid chain: Uroporphyrinogen decarboxylase (341 aa).

Substrate contacts are provided by residues 23–27 (RQAGR), aspartate 73, tyrosine 148, serine 203, and histidine 318.

It belongs to the uroporphyrinogen decarboxylase family. Homodimer.

Its subcellular location is the cytoplasm. It catalyses the reaction uroporphyrinogen III + 4 H(+) = coproporphyrinogen III + 4 CO2. Its pathway is porphyrin-containing compound metabolism; protoporphyrin-IX biosynthesis; coproporphyrinogen-III from 5-aminolevulinate: step 4/4. Catalyzes the decarboxylation of four acetate groups of uroporphyrinogen-III to yield coproporphyrinogen-III. In Brucella suis (strain ATCC 23445 / NCTC 10510), this protein is Uroporphyrinogen decarboxylase.